A 37-amino-acid polypeptide reads, in one-letter code: Large ribosomal subunit protein bL36 (37 aa).

It belongs to the bacterial ribosomal protein bL36 family.

The chain is Large ribosomal subunit protein bL36 from Bacillus anthracis (strain A0248).